We begin with the raw amino-acid sequence, 407 residues long: MKYDNLLDRFIKYVKVNTRSDPDSETTPSTESQEAFALTILKPEMEAIGLQDVHYNPVNGYLIGTLPANNPTLTRKIGFIAHMDTADFNAENVNPQIIDNYQGGDITLGSSNYKLDPKAFPNLNNYIGQTLITTDGTTLLGADDKSGIAEIMTAIEFLTSQPQIEHCDIKVAFGPDEEIGVGADKFEVADFEVDFAYTMDGGPLGELQYETFSAAALEVTFLGRNVHPGTAKDQMINALELAIDFHEKLPAKERPEYTDGYQGFYHLTGLTGTVEEARASYIIRDFEEASFEARKVKVENIAQSMNAHLGTKRVLVELNDQYYNMKKVIEKDMTAIELAKEVMEELAIKPVIEPIRGGTDGSKISFMGIPTPNIFAGGENMHGRFEFVSLQTMERAVDVIIGLVCKA.

Histidine 82 lines the Zn(2+) pocket. The active site involves aspartate 84. Aspartate 143 contacts Zn(2+). Glutamate 177 functions as the Proton acceptor in the catalytic mechanism. Positions 178, 200, and 382 each coordinate Zn(2+).

Belongs to the peptidase M20B family. The cofactor is Zn(2+).

The protein localises to the cytoplasm. It carries out the reaction Release of the N-terminal residue from a tripeptide.. Cleaves the N-terminal amino acid of tripeptides. The polypeptide is Peptidase T (Streptococcus pyogenes serotype M12 (strain MGAS2096)).